Here is a 219-residue protein sequence, read N- to C-terminus: MSALHSIPHRSKKLPPLRVGVGGPVGSGKTTLVEMLCKSMRERWDLVVVTNDIYTKEDQRLLTVSGALEPERIMGVETGGCPHTAIREDASINLEAVDRMLAKFPNADIVFIESGGDNLAATFSPELSDLTIYVIDVAAGEKIPRKGGPGITKSDLFVINKTDLAPHVGADLAVMEADTQRMRPAHASSRPYVMTNLKTRAGLAEVVSFIERRGLLHAA.

A disordered region spans residues 1–20; that stretch reads MSALHSIPHRSKKLPPLRVG. Residue 23 to 30 participates in GTP binding; it reads GPVGSGKT.

Belongs to the SIMIBI class G3E GTPase family. UreG subfamily. In terms of assembly, homodimer. UreD, UreF and UreG form a complex that acts as a GTP-hydrolysis-dependent molecular chaperone, activating the urease apoprotein by helping to assemble the nickel containing metallocenter of UreC. The UreE protein probably delivers the nickel.

It is found in the cytoplasm. Facilitates the functional incorporation of the urease nickel metallocenter. This process requires GTP hydrolysis, probably effectuated by UreG. The sequence is that of Urease accessory protein UreG from Methylibium petroleiphilum (strain ATCC BAA-1232 / LMG 22953 / PM1).